Here is a 522-residue protein sequence, read N- to C-terminus: Peptide chain release factor 3 (522 aa).

The 268-residue stretch at Ala-10–Ser-277 folds into the tr-type G domain. Residues Ser-19–Thr-26, Asp-87–His-91, and Asn-141–Asp-144 contribute to the GTP site.

The protein belongs to the TRAFAC class translation factor GTPase superfamily. Classic translation factor GTPase family. PrfC subfamily.

The protein resides in the cytoplasm. Increases the formation of ribosomal termination complexes and stimulates activities of RF-1 and RF-2. It binds guanine nucleotides and has strong preference for UGA stop codons. It may interact directly with the ribosome. The stimulation of RF-1 and RF-2 is significantly reduced by GTP and GDP, but not by GMP. This Listeria monocytogenes serotype 4b (strain CLIP80459) protein is Peptide chain release factor 3.